Reading from the N-terminus, the 301-residue chain is tRNA dimethylallyltransferase 1 (301 aa).

10–17 contributes to the ATP binding site; it reads GPTASGKT. Residue 12-17 participates in substrate binding; it reads TASGKT. Residues 35 to 38 form an interaction with substrate tRNA region; the sequence is DSRQ.

Belongs to the IPP transferase family. Monomer. Mg(2+) serves as cofactor.

The enzyme catalyses adenosine(37) in tRNA + dimethylallyl diphosphate = N(6)-dimethylallyladenosine(37) in tRNA + diphosphate. In terms of biological role, catalyzes the transfer of a dimethylallyl group onto the adenine at position 37 in tRNAs that read codons beginning with uridine, leading to the formation of N6-(dimethylallyl)adenosine (i(6)A). In Geotalea uraniireducens (strain Rf4) (Geobacter uraniireducens), this protein is tRNA dimethylallyltransferase 1.